We begin with the raw amino-acid sequence, 123 residues long: Cholecystokinin (123 aa).

The N-terminal stretch at 1-19 (MNAGICVCVLLAALSTSSC) is a signal peptide. A propeptide spanning residues 20–103 (LSLPAVSEDG…MGNNHRIKDR (84 aa)) is cleaved from the precursor. The disordered stretch occupies residues 43-67 (HTRAAPSSGQLSLLSKAEDDEEPRS). Y105 bears the Sulfotyrosine mark. F111 is modified (phenylalanine amide). A propeptide spanning residues 115–123 (SAEEYEYSS) is cleaved from the precursor. Residues Y119 and Y121 each carry the sulfotyrosine modification.

The protein belongs to the gastrin/cholecystokinin family. In terms of processing, the precursor is cleaved by proteases to produce a number of active cholecystokinins. Expressed in the ovary, kidney, gill, gastrointestinal tract and pituitary. Differentially expressed in the brain in the optic tectum-thalamus, hypothalamus, telencephalon, olfactory bulb and tract, preoptic region and posterior brain region. Expression is strongest in the hypothalamus, where localization is to the posterior ventrolateral region. Expression in the brain is transiently increased 2 hours after feeding. Abundant in the sensory layers of the vagal lobe and along the border of the sensory region of the lobe and the deep fiber laye. Also present in the facial lobe and throughout the glossopharyngeal lobe.

It localises to the secreted. This peptide hormone induces gall bladder contraction and the release of pancreatic enzymes in the gut. Induces the secretion of gonadotropin and growth hormone from the pituitary. Suppresses food intake and decreases the expression of preprosomatostatin genes in the forebrain. The chain is Cholecystokinin (cck) from Carassius auratus (Goldfish).